A 131-amino-acid polypeptide reads, in one-letter code: Snaclec macrovipecetin subunit alpha (131 aa).

3 cysteine pairs are disulfide-bonded: Cys2–Cys13, Cys30–Cys125, and Cys100–Cys117. One can recognise a C-type lectin domain in the interval His9–Lys126.

Heterodimer of subunits alpha and beta; disulfide-linked. Expressed by the venom gland.

Its subcellular location is the secreted. Its function is as follows. Interferes with one step of hemostasis (modulation of platelet aggregation, or coagulation cascade, for example). The protein is Snaclec macrovipecetin subunit alpha of Macrovipera lebetinus (Levantine viper).